We begin with the raw amino-acid sequence, 197 residues long: GTP cyclohydrolase-2 (197 aa).

50 to 54 lines the GTP pocket; it reads RIHSE. Zn(2+) contacts are provided by Cys-55, Cys-66, and Cys-68. GTP contacts are provided by residues Gln-71, 93 to 95, and Thr-115; that span reads EGR. Asp-127 functions as the Proton acceptor in the catalytic mechanism. The Nucleophile role is filled by Arg-129. Positions 150 and 155 each coordinate GTP.

The protein belongs to the GTP cyclohydrolase II family. It depends on Zn(2+) as a cofactor.

The enzyme catalyses GTP + 4 H2O = 2,5-diamino-6-hydroxy-4-(5-phosphoribosylamino)-pyrimidine + formate + 2 phosphate + 3 H(+). It functions in the pathway cofactor biosynthesis; riboflavin biosynthesis; 5-amino-6-(D-ribitylamino)uracil from GTP: step 1/4. In terms of biological role, catalyzes the conversion of GTP to 2,5-diamino-6-ribosylamino-4(3H)-pyrimidinone 5'-phosphate (DARP), formate and pyrophosphate. The polypeptide is GTP cyclohydrolase-2 (Tolumonas auensis (strain DSM 9187 / NBRC 110442 / TA 4)).